The chain runs to 1047 residues: MEQETPEKVDSAQEKVRGKSQPADDSEDSREKAGTEGTGELTEAYELQVAEEMAKEIKKKIRRKLKEQLTYFPPDTLLHDDKLGSEKRKKKKKKKVPVPAKPETSPSDVCDSAAEGEQKKEGAPEGSHHREGGCSTEQNADASVPENTKPKPKKMKKKPKAVSEDNEETNGDGVHEITGRDSPVHPKCLLDDDLVMGVYIHRTDRLKSDFMISHPMVKIHVVDEHTGQYVKKDDSERPVSSYYEKDNVDYILPIMTQPYDFKKLKSRLPEWEEQVIFNENFPYLLREFDECPKVILFFEILDFLSMDEIKNNSEFQNQECGFRKIAWAFLKLLGANGNANINSKLRLQLYYPPTKPRSQPNVVEVFEWWSKCPRNRYPSTLYVTVRGLKVPDCIKPSYRSMMALQEERGTPVYCERHRETSSVDTEPGLEDSKEEVKWKRLPGQACRIPNKHLFSLNAGERGCFCLDFSHNGRILAAACASRDGYPIILYEIPSGRFMRELCGHLNIIYDLDWSKDDRYLVTSSSDGTARVWKNEINSTSTFRVLPHPSFVYTARFHPATRELVVTGCYDSMIRIWKVDAREDAAILVRQLDVHKSFVNSICFDDEGHHMYSGDCIGVIAVWDTYVKVTDVQHSVRHWTINKEIKETEFRGVPVSYLEVHPNGKRLLIHTKDSTLRIMDLRILAARKFVGAANYREKIHSTLTPCGTLLFSGSEDGIVYVWNPETGEQVAMYSELPFKSTIRDISYHPFENMVAFCAFGQSEPILLYIYDFQVAQQEAEMLKRYSGTVPLPGIHLSEDALCTCPKLPQQGSFQIDEFVNTENNSSRKIQLVKQRLETVTEVIRSCAAKVNKNLSITSPPPGPAKKPRVKQSFVLTTDQIIHQFGVPQTAFISIERRPFMRPVDPPPMVVALYDYTASRSDELTIHRGDIIRVFFKDNEDWWYGSLGKGQEGFFPANHVASETLYRDSPPKVKERSPPLTPKEKAKMEKPPASRKSLIKDRFLDSRLGSKPMGHSEKGRDQNFEERGHKSDMEMKKSEPTVRKVTLIE.

Basic and acidic residues-rich tracts occupy residues 1–17 (MEQE…EKVR) and 77–86 (LLHDDKLGSE). Disordered stretches follow at residues 1-44 (MEQE…LTEA) and 67-185 (EQLT…SPVH). The segment at 1-285 (MEQETPEKVD…IFNENFPYLL (285 aa)) is interaction with HAP1. The span at 87–96 (KRKKKKKKKV) shows a compositional bias: basic residues. Residues 116–132 (GEQKKEGAPEGSHHREG) show a composition bias toward basic and acidic residues. Residues 150-160 (PKPKKMKKKPK) show a composition bias toward basic residues. Over residues 173–185 (GVHEITGRDSPVH) the composition is skewed to basic and acidic residues. WD repeat units follow at residues 458–500 (AGER…FMRE), 503–542 (GHLN…TSTF), 546–586 (PHPS…DAAI), 593–632 (VHKS…TDVQ), 649–688 (FRGV…ARKF), 692–731 (ANYR…QVAM), and 736–777 (PFKS…AQQE). The residue at position 854 (S854) is a Phosphoserine. Residues 903 to 963 (DPPPMVVALY…PANHVASETL (61 aa)) enclose the SH3 domain. 2 stretches are compositionally biased toward basic and acidic residues: residues 964 to 1003 (YRDS…RFLD) and 1012 to 1040 (GHSE…EPTV). Residues 964-1047 (YRDSPPKVKE…PTVRKVTLIE (84 aa)) are disordered. S975 carries the phosphoserine modification.

As to quaternary structure, self-associates. Part of the tectonic-like complex (also named B9 complex). Interacts with MKS1. Interacts with NPHP1; probably as heterodimers and/or AHI1(2):NPHP1(2) heterotetramers. Interacts (via SH3 domain) with the dynamin GTPase DNM2. Interacts with HAP1; probably as AHI1(2):HAP1(2) heterotetramers. Interacts with RAB8A. Interacts with CEND1. Interacts with SPATA7.

The protein resides in the cytoplasm. It is found in the cytoskeleton. Its subcellular location is the cilium basal body. The protein localises to the microtubule organizing center. It localises to the centrosome. The protein resides in the centriole. It is found in the cell junction. Its subcellular location is the adherens junction. Involved in vesicle trafficking and required for ciliogenesis, formation of primary non-motile cilium, and recruitment of RAB8A to the basal body of primary cilium. Component of the tectonic-like complex, a complex localized at the transition zone of primary cilia and acting as a barrier that prevents diffusion of transmembrane proteins between the cilia and plasma membranes. Involved in neuronal differentiation. As a positive modulator of classical Wnt signaling, may play a crucial role in ciliary signaling during cerebellum embryonic development. The sequence is that of Jouberin (Ahi1) from Rattus norvegicus (Rat).